Consider the following 317-residue polypeptide: Neuroguidin-A (317 aa).

Disordered regions lie at residues 125 to 170 and 280 to 317; these read ENDP…SKVK and SALTGGEGRAEDMVPSMKKSKKGPKKSKKKKGFSRRRH. A compositionally biased stretch (acidic residues) spans 146–157; it reads DERESDSGEEGA. A compositionally biased stretch (basic residues) spans 297–317; that stretch reads KKSKKGPKKSKKKKGFSRRRH.

Belongs to the SAS10 family. In terms of assembly, part of the small subunit (SSU) processome, composed of more than 70 proteins and the RNA chaperone small nucleolar RNA (snoRNA) U3.

The protein resides in the nucleus. Its subcellular location is the nucleolus. It is found in the chromosome. It localises to the centromere. The protein localises to the cytoplasm. The protein resides in the cell projection. Its subcellular location is the axon. It is found in the dendrite. It localises to the filopodium. Its function is as follows. Part of the small subunit (SSU) processome, first precursor of the small eukaryotic ribosomal subunit. During the assembly of the SSU processome in the nucleolus, many ribosome biogenesis factors, an RNA chaperone and ribosomal proteins associate with the nascent pre-rRNA and work in concert to generate RNA folding, modifications, rearrangements and cleavage as well as targeted degradation of pre-ribosomal RNA by the RNA exosome. Its dissociation from the complex determines the transition from state pre-A1 to state pre-A1*. May inhibit mRNA translation. The sequence is that of Neuroguidin-A (ngdn-a) from Xenopus laevis (African clawed frog).